A 674-amino-acid chain; its full sequence is Translation factor GUF1, mitochondrial (674 aa).

The transit peptide at 1 to 48 (MRGCLQPARWLTTATLRRPLLSCPRQLPTRYNPFPRPFHHAPVLQARQ) directs the protein to the mitochondrion. The tr-type G domain maps to 66–246 (ERYRNFCIVA…AIIESIPALL (181 aa)). GTP contacts are provided by residues 75 to 82 (AHVDHGKS), 139 to 143 (DTPGH), and 193 to 196 (NKVD).

The protein belongs to the TRAFAC class translation factor GTPase superfamily. Classic translation factor GTPase family. LepA subfamily.

The protein localises to the mitochondrion inner membrane. The catalysed reaction is GTP + H2O = GDP + phosphate + H(+). Its function is as follows. Promotes mitochondrial protein synthesis. May act as a fidelity factor of the translation reaction, by catalyzing a one-codon backward translocation of tRNAs on improperly translocated ribosomes. Binds to mitochondrial ribosomes in a GTP-dependent manner. The polypeptide is Translation factor GUF1, mitochondrial (Arthroderma otae (strain ATCC MYA-4605 / CBS 113480) (Microsporum canis)).